Consider the following 418-residue polypeptide: Xanthosine permease (418 aa).

Residues Met-1–Val-9 are Cytoplasmic-facing. Residues Met-10 to Ile-30 traverse the membrane as a helical segment. At Asn-31–Gly-41 the chain is on the periplasmic side. Residues Met-42 to Ala-62 traverse the membrane as a helical segment. Residues Asp-63 to Arg-70 are Cytoplasmic-facing. The next 2 membrane-spanning stretches (helical) occupy residues Ala-71–Asp-91 and Pro-92–Leu-112. The Cytoplasmic segment spans residues Ser-113–Arg-136. The chain crosses the membrane as a helical span at residues Val-137 to Leu-157. Residues Ser-158 to Ser-159 are Periplasmic-facing. Residues Leu-160–Pro-180 form a helical membrane-spanning segment. The Cytoplasmic segment spans residues Lys-181–Arg-209. A helical membrane pass occupies residues Met-210 to Phe-230. Topologically, residues Gly-231–Ser-254 are periplasmic. Residues Ile-255 to Leu-275 form a helical membrane-spanning segment. Over Lys-276 to Arg-277 the chain is Cytoplasmic. A helical membrane pass occupies residues Phe-278–Phe-298. The Periplasmic segment spans residues Ala-299–Thr-306. The helical transmembrane segment at Gly-307 to Ile-327 threads the bilayer. Topologically, residues Ser-328–Leu-348 are cytoplasmic. Residues Phe-349–Val-369 traverse the membrane as a helical segment. Topologically, residues Asp-370–Gln-381 are periplasmic. Residues Thr-382–Phe-402 form a helical membrane-spanning segment. At Lys-403–His-418 the chain is on the cytoplasmic side.

It belongs to the major facilitator superfamily. Nucleoside:H(+) symporter (NHS) (TC 2.A.1.10) family.

The protein resides in the cell inner membrane. The catalysed reaction is xanthosine(in) + H(+)(in) = xanthosine(out) + H(+)(out). With respect to regulation, transport is abolished by the proton uncoupler 2,4-dinitrophenol. In terms of biological role, uptake of xanthosine. Can also transport other nucleosides such as inosine, adenosine, cytidine, uridine and thymidine. Transport is driven by a proton motive force. The protein is Xanthosine permease of Escherichia coli (strain K12).